We begin with the raw amino-acid sequence, 274 residues long: N-acetylmuramic acid 6-phosphate etherase (274 aa).

An SIS domain is found at 54–217; that stretch reads IIPRIDSGGR…STSVMIKLGR (164 aa). Glutamate 82 serves as the catalytic Proton donor. Glutamate 113 is an active-site residue.

It belongs to the GCKR-like family. MurNAc-6-P etherase subfamily. In terms of assembly, homodimer.

The catalysed reaction is N-acetyl-D-muramate 6-phosphate + H2O = N-acetyl-D-glucosamine 6-phosphate + (R)-lactate. The protein operates within amino-sugar metabolism; N-acetylmuramate degradation. Its function is as follows. Specifically catalyzes the cleavage of the D-lactyl ether substituent of MurNAc 6-phosphate, producing GlcNAc 6-phosphate and D-lactate. The protein is N-acetylmuramic acid 6-phosphate etherase of Christiangramia forsetii (strain DSM 17595 / CGMCC 1.15422 / KT0803) (Gramella forsetii).